The following is an 89-amino-acid chain: Small ribosomal subunit protein uS15 (89 aa).

It belongs to the universal ribosomal protein uS15 family. In terms of assembly, part of the 30S ribosomal subunit. Forms a bridge to the 50S subunit in the 70S ribosome, contacting the 23S rRNA.

Functionally, one of the primary rRNA binding proteins, it binds directly to 16S rRNA where it helps nucleate assembly of the platform of the 30S subunit by binding and bridging several RNA helices of the 16S rRNA. Forms an intersubunit bridge (bridge B4) with the 23S rRNA of the 50S subunit in the ribosome. The chain is Small ribosomal subunit protein uS15 from Lactobacillus gasseri (strain ATCC 33323 / DSM 20243 / BCRC 14619 / CIP 102991 / JCM 1131 / KCTC 3163 / NCIMB 11718 / NCTC 13722 / AM63).